Here is a 209-residue protein sequence, read N- to C-terminus: Guanylate kinase (209 aa).

One can recognise a Guanylate kinase-like domain in the interval 9-188 (GIMLVMSSPS…SVQQIKSIFI (180 aa)). 16 to 23 (SPSGGGKT) lines the ATP pocket.

This sequence belongs to the guanylate kinase family.

The protein localises to the cytoplasm. The enzyme catalyses GMP + ATP = GDP + ADP. In terms of biological role, essential for recycling GMP and indirectly, cGMP. The chain is Guanylate kinase from Ehrlichia ruminantium (strain Gardel).